The sequence spans 858 residues: ATP-dependent DNA helicase Q-like SIM (858 aa).

A UBA domain is found at aspartate 2–glycine 44. In terms of domain architecture, Helicase ATP-binding spans leucine 177–threonine 353. Residue alanine 190–serine 197 participates in ATP binding. The short motif at aspartate 288–histidine 291 is the DEAH box element. Residues leucine 402–leucine 450 form a disordered region. Positions glycine 416–threonine 426 are enriched in basic and acidic residues. The span at aspartate 427–glutamate 436 shows a compositional bias: acidic residues. Over residues asparagine 437–lysine 448 the composition is skewed to polar residues. The 137-residue stretch at glutamate 491–serine 627 folds into the Helicase C-terminal domain. The tract at residues arginine 822–glutamate 858 is disordered. The segment covering arginine 830 to glutamate 858 has biased composition (basic residues).

The protein belongs to the helicase family. RecQ subfamily. Mg(2+) is required as a cofactor. Requires Mn(2+) as cofactor. As to expression, mostly expressed in roots and seedlings, and, to a lower extent, in leaves, shoots, shoot apical mersitem, inflorescences, flowers, siliques and seeds.

It localises to the nucleus. It catalyses the reaction Couples ATP hydrolysis with the unwinding of duplex DNA by translocating in the 3'-5' direction.. The enzyme catalyses ATP + H2O = ADP + phosphate + H(+). Its function is as follows. Plant specific, probable 3'-5' DNA helicase that may play a role in the repair of DNA. The sequence is that of ATP-dependent DNA helicase Q-like SIM (RECQSIM) from Arabidopsis thaliana (Mouse-ear cress).